The following is a 360-amino-acid chain: MEGNGCGGSGATPRGVVGMHWAPVVTSPPSPQPPFLPPAPCRPDVQMQQQGGLTCLKLGKRPCFWGGDGAGQVAQGSGGGGGGGGGGSADQGKRKEKAATAVPVVPRCQVEGCDITLQGVKEYHRRHKVCEVHAKAPRVVVHGTEQRFCQQCSRFHVLAEFDDAKKSCRRRLAGHNERRRRSNASEAMARGSAHPHGMPVLGHGFPPYGLPTSSAGALSLLSSARATGPWLMPTPDISARSSAALDELIAENRAALLSWQFFSDRQPPPAGRPTGRSPGSETAGGWHAHLQARPPPPGAGGQHEHQSGHVTLDLMQATTAAGGSGAPFRPVPARPAKEGGDAGCTSDAWTPSPMEGARVV.

Positions 74–89 are enriched in gly residues; that stretch reads AQGSGGGGGGGGGGSA. Positions 74–98 are disordered; it reads AQGSGGGGGGGGGGSADQGKRKEKA. The SBP-type zinc finger occupies 105–182; that stretch reads VPRCQVEGCD…AGHNERRRRS (78 aa). Zn(2+) is bound by residues Cys108, Cys113, Cys130, His133, Cys149, Cys152, His156, and Cys168. Positions 165-181 match the Bipartite nuclear localization signal motif; that stretch reads KKSCRRRLAGHNERRRR. Residues 172 to 182 are compositionally biased toward basic residues; that stretch reads LAGHNERRRRS. Disordered stretches follow at residues 172–196, 261–306, and 320–360; these read LAGH…AHPH, FFSD…HEHQ, and AAGG…ARVV.

Expressed in young panicles.

It localises to the nucleus. Functionally, trans-acting factor that binds specifically to the consensus nucleotide sequence 5'-TNCGTACAA-3'. May be involved in panicle development. In Oryza sativa subsp. indica (Rice), this protein is Squamosa promoter-binding-like protein 7 (SPL7).